The chain runs to 165 residues: Nucleotide-binding protein Syncc9605_0652 (165 aa).

It belongs to the YajQ family.

Its function is as follows. Nucleotide-binding protein. The polypeptide is Nucleotide-binding protein Syncc9605_0652 (Synechococcus sp. (strain CC9605)).